The chain runs to 338 residues: Ketol-acid reductoisomerase (NADP(+)) (338 aa).

The KARI N-terminal Rossmann domain occupies 1–181; the sequence is MKVYYDKDAD…GGTKGGVIET (181 aa). Residues 24-27, arginine 47, and serine 52 contribute to the NADP(+) site; that span reads YGSQ. Histidine 107 is an active-site residue. An NADP(+)-binding site is contributed by glycine 133. The KARI C-terminal knotted domain occupies 182 to 327; that stretch reads NFREETETDL…SQLRAMMPWI (146 aa). 4 residues coordinate Mg(2+): aspartate 190, glutamate 194, glutamate 226, and glutamate 230. Serine 251 is a binding site for substrate.

It belongs to the ketol-acid reductoisomerase family. It depends on Mg(2+) as a cofactor.

The catalysed reaction is (2R)-2,3-dihydroxy-3-methylbutanoate + NADP(+) = (2S)-2-acetolactate + NADPH + H(+). The enzyme catalyses (2R,3R)-2,3-dihydroxy-3-methylpentanoate + NADP(+) = (S)-2-ethyl-2-hydroxy-3-oxobutanoate + NADPH + H(+). Its pathway is amino-acid biosynthesis; L-isoleucine biosynthesis; L-isoleucine from 2-oxobutanoate: step 2/4. It participates in amino-acid biosynthesis; L-valine biosynthesis; L-valine from pyruvate: step 2/4. In terms of biological role, involved in the biosynthesis of branched-chain amino acids (BCAA). Catalyzes an alkyl-migration followed by a ketol-acid reduction of (S)-2-acetolactate (S2AL) to yield (R)-2,3-dihydroxy-isovalerate. In the isomerase reaction, S2AL is rearranged via a Mg-dependent methyl migration to produce 3-hydroxy-3-methyl-2-ketobutyrate (HMKB). In the reductase reaction, this 2-ketoacid undergoes a metal-dependent reduction by NADPH to yield (R)-2,3-dihydroxy-isovalerate. The polypeptide is Ketol-acid reductoisomerase (NADP(+)) (Methylobacillus flagellatus (strain ATCC 51484 / DSM 6875 / VKM B-1610 / KT)).